Here is a 185-residue protein sequence, read N- to C-terminus: Ribosome-recycling factor (185 aa).

The protein belongs to the RRF family.

Its subcellular location is the cytoplasm. Functionally, responsible for the release of ribosomes from messenger RNA at the termination of protein biosynthesis. May increase the efficiency of translation by recycling ribosomes from one round of translation to another. This Serratia proteamaculans (strain 568) protein is Ribosome-recycling factor.